Consider the following 212-residue polypeptide: Transcription antitermination protein NusB (212 aa).

Belongs to the NusB family.

In terms of biological role, involved in transcription antitermination. Required for transcription of ribosomal RNA (rRNA) genes. Binds specifically to the boxA antiterminator sequence of the ribosomal RNA (rrn) operons. In Gloeothece citriformis (strain PCC 7424) (Cyanothece sp. (strain PCC 7424)), this protein is Transcription antitermination protein NusB.